Reading from the N-terminus, the 307-residue chain is Acetaldehyde dehydrogenase 2 (307 aa).

Catalysis depends on C131, which acts as the Acyl-thioester intermediate. Residues 162-170 and N273 contribute to the NAD(+) site; that span reads SVGPGTRKN.

This sequence belongs to the acetaldehyde dehydrogenase family.

The catalysed reaction is acetaldehyde + NAD(+) + CoA = acetyl-CoA + NADH + H(+). This is Acetaldehyde dehydrogenase 2 (aphF) from Comamonas testosteroni (Pseudomonas testosteroni).